The chain runs to 88 residues: Small ribosomal subunit protein bS20 (88 aa).

The protein belongs to the bacterial ribosomal protein bS20 family.

Binds directly to 16S ribosomal RNA. The chain is Small ribosomal subunit protein bS20 from Bartonella tribocorum (strain CIP 105476 / IBS 506).